The chain runs to 1360 residues: Ubiquitin carboxyl-terminal hydrolase 19 (1360 aa).

The interval 1-46 (MSAGASATGPRRGPPGLEEATSKKKQKDRANLESKDGDARRVSLPR) is disordered. Residues 1 to 1333 (MSAGASATGP…TTPDEGCLRY (1333 aa)) are Cytoplasmic-facing. Basic and acidic residues predominate over residues 28–46 (DRANLESKDGDARRVSLPR). One can recognise a CS 1 domain in the interval 51-140 (KDELLLDWRQ…VPLLTWPSLL (90 aa)). The interval 163-239 (PIALEPGSEP…APSFLSDSAT (77 aa)) is disordered. Positions 170 to 181 (SEPRRAKQEARN) are enriched in basic and acidic residues. Over residues 189–199 (GEVGSGAGPGT) the composition is skewed to gly residues. S220 carries the phosphoserine modification. The CS 2 domain occupies 322 to 424 (LAFVKNDSYE…RQSQRWGGLE (103 aa)). Residues 432-482 (VGGAKVAVPTGPTPLDSTPPGGGPHPLTGQEEARAVEKEKPKARSEDSGLD) form a disordered region. The span at 462–478 (EEARAVEKEKPKARSED) shows a compositional bias: basic and acidic residues. The region spanning 539-1256 (TGLVNLGNTC…YAYVLFYRRR (718 aa)) is the USP domain. Catalysis depends on C548, which acts as the Nucleophile. 8 residues coordinate Zn(2+): C833, C836, C850, C853, C859, C863, H871, and C875. The MYND-type zinc finger occupies 833–875 (CAACQRKQQSEEEKLKRCTRCYRVGYCNQFCQKTHWPDHKGLC). Residues 965 to 988 (DTGAHRVWPPADRGPVPSTSGLSS) form a disordered region. The active-site Proton acceptor is H1207. Basic and acidic residues predominate over residues 1259–1274 (PVERPPRASHSEHHPD). A disordered region spans residues 1259 to 1281 (PVERPPRASHSEHHPDLGPAAEA). A helical transmembrane segment spans residues 1334–1354 (FVLGTVAALVALVLNVFYPLV). Topologically, residues 1355–1360 (SQSRWR) are lumenal.

Interacts with RNF123. Interacts with BIRC2/c-IAP1, BIRC3/c-IAP2 and XIAP/BIRC4. Interacts with HIF1A (via N-terminus).

Its subcellular location is the endoplasmic reticulum membrane. The catalysed reaction is Thiol-dependent hydrolysis of ester, thioester, amide, peptide and isopeptide bonds formed by the C-terminal Gly of ubiquitin (a 76-residue protein attached to proteins as an intracellular targeting signal).. Deubiquitinating enzyme that regulates the degradation of various proteins by removing ubiquitin moieties, thereby preventing their proteasomal degradation. Stabilizes RNF123, which promotes CDKN1B degradation and contributes to cell proliferation. Decreases the levels of ubiquitinated proteins during skeletal muscle formation and acts to repress myogenesis. Modulates transcription of major myofibrillar proteins. Also involved in turnover of endoplasmic-reticulum-associated degradation (ERAD) substrates. Mechanistically, deubiquitinates and thereby stabilizes several E3 ligases involved in the ERAD pathway including SYVN1 or MARCHF6. Regulates the stability of other E3 ligases including BIRC2/c-IAP1 and BIRC3/c-IAP2 by preventing their ubiquitination. Required for cells to mount an appropriate response to hypoxia by rescuing HIF1A from degradation in a non-catalytic manner and by mediating the deubiquitination of FUNDC1. Attenuates mitochondrial damage and ferroptosis by targeting and stabilizing NADPH oxidase 4/NOX4. Negatively regulates TNF-alpha- and IL-1beta-triggered NF-kappa-B activation by hydrolyzing 'Lys-27'- and 'Lys-63'-linked polyubiquitin chains from MAP3K7. Modulates also the protein level and aggregation of polyQ-expanded huntingtin/HTT through HSP90AA1. This is Ubiquitin carboxyl-terminal hydrolase 19 (Usp19) from Mus musculus (Mouse).